The sequence spans 1091 residues: MGEGTTKENNNAEFNAYHTLTAEEAAEFIGTSLTEGLTQDEFVHRLKTVGENTLGDDTKIDYKAMVLHQVCNAMIMVLLISMIISFAMHDWITGGVISFVIAVNVLIGLVQEYKATKTMNSLKNLSSPNAHVIRNGKSETINSKDVVPGDICLVKVGDTIPADLRLIETKNFDTDESLLTGESLPVSKDANLVFGKEEETSVGDRLNLAFSSSAVVKGRAKGIVIKTALNSEIGKIAKSLQGDSGLISRDPSKSWLQNTWISTKKVTGAFLGTNVGTPLHRKLSKLAVLLFWIAVLFAIIVMASQKFDVDKRVAIYAICVALSMIPSSLVVVLTITMSVGAAVMVSRNVIVRKLDSLEALGAVNDICSDKTGTLTQGKMLARQIWIPRFGTITISNSDDPFNPNEGNVSLIPRFSPYEYSHNEDGDVGILQNFKDRLYEKDLPEDIDMDLFQKWLETATLANIATVFKDDATDCWKAHGDPTEIAIQVFATKMDLPHNALTGEKSTNQSNENDQSSLSQHNEKPGSAQFEHIAEFPFDSTVKRMSSVYYNNHNETYNIYGKGAFESIISCCSSWYGKDGVKITPLTDCDVETIRKNVYSLSNEGLRVLGFASKSFTKDQVNDDQLKNITSNRATAESDLVFLGLIGIYDPPRNETAGAVKKFHQAGINVHMLTGDFVGTAKAIAQEVGILPTNLYHYSQEIVDSMVMTGSQFDGLSEEEVDDLPVLPLVIARCSPQTKVRMIEALHRRKKFCTMTGDGVNDSPSLKMANVGIAMGINGSDVSKEASDIVLSDDNFASILNAVEEGRRMTDNIQKFVLQLLAENVAQALYLIIGLVFRDENGKSVFPLSPVEVLWIIVVTSCFPAMGLGLEKAAPDLMDRPPHDSEVGIFTWEVIIDTFAYGIIMTGSCMASFTGSLYGINSGRLGHDCDGTYNSSCRDVYRSRSAAFATMTWCALILAWEVVDMRRSFFRMHPDTDSPVKEFFRSIWGNQFLFWSIIFGFVSAFPVVYIPVINDKVFLHKPIGAEWGLAIAFTIAFWIGAELYKCGKRRYFKTQRAHNPENDLESNNKRDPFEAYSTSTTIHTEVNIGIKQ.

The Cytoplasmic segment spans residues 1–63 (MGEGTTKENN…LGDDTKIDYK (63 aa)). A helical transmembrane segment spans residues 64-84 (AMVLHQVCNAMIMVLLISMII). The Extracellular segment spans residues 85 to 90 (SFAMHD). A helical transmembrane segment spans residues 91–111 (WITGGVISFVIAVNVLIGLVQ). The Cytoplasmic portion of the chain corresponds to 112–282 (EYKATKTMNS…TNVGTPLHRK (171 aa)). A helical transmembrane segment spans residues 283–303 (LSKLAVLLFWIAVLFAIIVMA). The Extracellular portion of the chain corresponds to 304–312 (SQKFDVDKR). A helical membrane pass occupies residues 313-333 (VAIYAICVALSMIPSSLVVVL). Over 334–815 (TITMSVGAAV…RRMTDNIQKF (482 aa)) the chain is Cytoplasmic. The 4-aspartylphosphate intermediate role is filled by Asp369. The Mg(2+) site is built by Asp369 and Thr371. ATP contacts are provided by Thr371 and Glu483. Residues 499–525 (ALTGEKSTNQSNENDQSSLSQHNEKPG) form a disordered region. Polar residues predominate over residues 503 to 519 (EKSTNQSNENDQSSLSQ). Positions 561, 606, 673, 674, 675, 732, and 738 each coordinate ATP. Residue Asp757 coordinates Mg(2+). Asn760 contributes to the ATP binding site. Residues 816–836 (VLQLLAENVAQALYLIIGLVF) form a helical membrane-spanning segment. Over 837–848 (RDENGKSVFPLS) the chain is Extracellular. A helical membrane pass occupies residues 849 to 869 (PVEVLWIIVVTSCFPAMGLGL). Topologically, residues 870–885 (EKAAPDLMDRPPHDSE) are cytoplasmic. A helical membrane pass occupies residues 886–906 (VGIFTWEVIIDTFAYGIIMTG). Over 907 to 943 (SCMASFTGSLYGINSGRLGHDCDGTYNSSCRDVYRSR) the chain is Extracellular. A helical transmembrane segment spans residues 944–964 (SAAFATMTWCALILAWEVVDM). Residues 965–991 (RRSFFRMHPDTDSPVKEFFRSIWGNQF) lie on the Cytoplasmic side of the membrane. The chain crosses the membrane as a helical span at residues 992 to 1012 (LFWSIIFGFVSAFPVVYIPVI). Over 1013–1021 (NDKVFLHKP) the chain is Extracellular. Residues 1022–1042 (IGAEWGLAIAFTIAFWIGAEL) form a helical membrane-spanning segment. Over 1043 to 1091 (YKCGKRRYFKTQRAHNPENDLESNNKRDPFEAYSTSTTIHTEVNIGIKQ) the chain is Cytoplasmic.

The protein belongs to the cation transport ATPase (P-type) (TC 3.A.3) family. Type IID subfamily. It depends on Mg(2+) as a cofactor. In terms of processing, the active site is phosphorylated in presence of sodium or potassium and in conditions of higher pH. Not phosphorylated in presence of calcium ions.

Its subcellular location is the cell membrane. The enzyme catalyses Na(+)(in) + ATP + H2O = Na(+)(out) + ADP + phosphate + H(+). The catalysed reaction is K(+)(in) + ATP + H2O = K(+)(out) + ADP + phosphate + H(+). Its function is as follows. Catalyzes the hydrolysis of ATP coupled with the export of sodium and potassium from the cell. May export potassium less efficiently. May transport other cations such as lithium. Sodium/potassium efflux ATPases are involved in salt tolerance and maintaining the membrane potential across the plasma membrane in high salinity (Na+) or alkaline (K+) environments. Is negatively modulated by SIS2/HAL3. In Saccharomyces cerevisiae (strain ATCC 204508 / S288c) (Baker's yeast), this protein is Sodium/potassium exporting P-type ATPase 1.